Consider the following 63-residue polypeptide: Large ribosomal subunit protein uL29 (63 aa).

It belongs to the universal ribosomal protein uL29 family.

The protein is Large ribosomal subunit protein uL29 of Escherichia coli O8 (strain IAI1).